A 241-amino-acid chain; its full sequence is NEP1-interacting protein 2 (241 aa).

Residues 1-20 (MASSSSSSYRFQSGSYPLSS) form a disordered region. The Lumenal, thylakoid segment spans residues 1–36 (MASSSSSSYRFQSGSYPLSSSPSLGNFVERIKDACH). A helical transmembrane segment spans residues 37–57 (FLVSAVLGTIISAILTFFFAL). Topologically, residues 58 to 76 (VGTLLGALTGALIGQETES) are stromal. The chain crosses the membrane as a helical span at residues 77-97 (GFIRGAAIGAISGAVFSIEVF). Residues 98 to 109 (ESSLDLWKSDES) are Lumenal, thylakoid-facing. Residues 110–130 (GFGCFLYLIDVIVSLLSGRLV) traverse the membrane as a helical segment. Residues 131–241 (RERIGPAMLS…GSCPMCRRDI (111 aa)) lie on the Stromal side of the membrane. Residues 196 to 238 (CSVCLQDFQLGETVRSLPHCHHMFHLPCIDNWLLRHGSCPMCR) form an RING-type; atypical zinc finger.

It belongs to the RING-type zinc finger family. NIP subfamily. Interacts with RPOT2.

It is found in the plastid. The protein localises to the chloroplast thylakoid membrane. Its function is as follows. Intrinsic thylakoid membrane protein that fixes RPOT2 on the stromal side of the thylakoid membrane. The sequence is that of NEP1-interacting protein 2 (NIP2) from Arabidopsis thaliana (Mouse-ear cress).